The following is a 589-amino-acid chain: Aspartate--tRNA ligase (589 aa).

Glutamate 172 serves as a coordination point for L-aspartate. The segment at 196 to 199 (QLFK) is aspartate. Residue arginine 218 participates in L-aspartate binding. ATP-binding positions include 218-220 (RDE) and glutamine 227. Histidine 449 is an L-aspartate binding site. Position 483 (glutamate 483) interacts with ATP. Arginine 490 is an L-aspartate binding site. 535-538 (GLDR) contacts ATP.

This sequence belongs to the class-II aminoacyl-tRNA synthetase family. Type 1 subfamily. As to quaternary structure, homodimer.

The protein resides in the cytoplasm. The enzyme catalyses tRNA(Asp) + L-aspartate + ATP = L-aspartyl-tRNA(Asp) + AMP + diphosphate. Functionally, catalyzes the attachment of L-aspartate to tRNA(Asp) in a two-step reaction: L-aspartate is first activated by ATP to form Asp-AMP and then transferred to the acceptor end of tRNA(Asp). The protein is Aspartate--tRNA ligase of Actinobacillus succinogenes (strain ATCC 55618 / DSM 22257 / CCUG 43843 / 130Z).